A 903-amino-acid chain; its full sequence is Dual 3',5'-cyclic-AMP and -GMP phosphodiesterase 11A (903 aa).

GAF domains lie at 175 to 324 (DLTS…GIAI) and 356 to 512 (DLEK…GLGI). 3',5'-cyclic GMP is bound at residue Ser378. The 325-residue stretch at 542-866 (SKTEVDKFKA…VKWEELDKKR (325 aa)) folds into the PDEase domain. His618 acts as the Proton donor in catalysis. His622, His658, Asp659, and Asp770 together coordinate a divalent metal cation. A disordered region spans residues 863–903 (DKKRQHDHGASVPASPCSAAEGSETGGVPCCSNNTPPTHVS). Residues 893 to 903 (CSNNTPPTHVS) show a composition bias toward polar residues.

This sequence belongs to the cyclic nucleotide phosphodiesterase family. A divalent metal cation is required as a cofactor.

It is found in the cytoplasm. The protein localises to the cytosol. It catalyses the reaction 3',5'-cyclic GMP + H2O = GMP + H(+). It carries out the reaction 3',5'-cyclic AMP + H2O = AMP + H(+). Functionally, plays a role in signal transduction by regulating the intracellular concentration of cyclic nucleotides cAMP and cGMP. Catalyzes the hydrolysis of both cAMP and cGMP to 5'-AMP and 5'-GMP, respectively. This Takifugu rubripes (Japanese pufferfish) protein is Dual 3',5'-cyclic-AMP and -GMP phosphodiesterase 11A (pde11a).